Reading from the N-terminus, the 365-residue chain is Ferredoxin--NADP reductase, chloroplastic (365 aa).

Residues 1–22 (MAAAVTAAVSFPSTKSTPLSTR) are disordered. Positions 11–22 (FPSTKSTPLSTR) are enriched in polar residues. The FAD-binding FR-type domain occupies 86–208 (KNPYTGRCLL…TGPVGKEMLM (123 aa)). FAD contacts are provided by residues 144-147 (RLYS), 165-167 (CVK), tyrosine 171, 182-184 (VCS), and threonine 223. Positions 147 and 167 each coordinate NADP(+). NADP(+) is bound by residues threonine 223, 255 to 256 (VP), 285 to 286 (SR), lysine 295, 324 to 325 (GL), and glutamate 363.

The protein belongs to the ferredoxin--NADP reductase type 1 family. Requires FAD as cofactor.

The protein localises to the plastid. The protein resides in the chloroplast stroma. It is found in the chloroplast thylakoid membrane. The enzyme catalyses 2 reduced [2Fe-2S]-[ferredoxin] + NADP(+) + H(+) = 2 oxidized [2Fe-2S]-[ferredoxin] + NADPH. It functions in the pathway energy metabolism; photosynthesis. Functionally, may play a key role in regulating the relative amounts of cyclic and non-cyclic electron flow to meet the demands of the plant for ATP and reducing power. The protein is Ferredoxin--NADP reductase, chloroplastic (PETH) of Mesembryanthemum crystallinum (Common ice plant).